A 403-amino-acid chain; its full sequence is TBC1 domain family member 20 (403 aa).

Residues 1-25 are disordered; sequence MALRSAQGDGPTSGHWDGGAEKADF. Residues 60–246 enclose the Rab-GAP TBC domain; it reads LLTDEIRRKV…RLYDFFLACH (187 aa). 2 consecutive transmembrane segments (helical) span residues 238–258 and 367–387; these read LYDF…AVIV and FVKL…LAVV.

In terms of assembly, (Microbial infection) Directly interacts with the N-terminal amphipathic helix of hepatitis C virus (HCV) NS5A.

Its subcellular location is the membrane. In terms of biological role, GTPase-activating protein (GAP) specific for Rab1 and Rab2 small GTPase families for which it can accelerate the intrinsic GTP hydrolysis rate by more than five orders of magnitude. Also shows GAP activity for RAB18 GTPase. Promotes RAB18 dissociation from the endoplasmic reticulum (ER) membrane into the cytosol, probably through stimulating RAB18 GTP-hydrolysis. Involved in maintaining endoplasmic reticulum structure. In Homo sapiens (Human), this protein is TBC1 domain family member 20.